The primary structure comprises 755 residues: Kelch-like protein 5 (755 aa).

Positions Leu152–Ser184 are disordered. Over residues Asp158–Ser168 the composition is skewed to acidic residues. Residues Asp169–Ser184 show a composition bias toward low complexity. The BTB domain maps to Cys220–Glu287. 6 Kelch repeats span residues Thr468–Asp514, Lys515–Gly561, Met563–Gly608, Lys609–Gly655, Leu657–Asp708, and Lys709–Lys754.

As to expression, expressed in adrenal gland, ovary and thyroid gland and less abundantly in lymph node, prostate, spinal cord, testis and trachea.

The protein localises to the cytoplasm. It localises to the cytoskeleton. This chain is Kelch-like protein 5 (KLHL5), found in Homo sapiens (Human).